The sequence spans 272 residues: Shikimate dehydrogenase (NADP(+)) (272 aa).

Residues 14–16 (SKS) and Thr-61 each bind shikimate. Lys-65 serves as the catalytic Proton acceptor. Residue Glu-77 coordinates NADP(+). Asn-86 and Asp-102 together coordinate shikimate. Residues 126–130 (GAGGA), 149–154 (NRTFSR), and Met-213 contribute to the NADP(+) site. Tyr-215 contacts shikimate. Gly-237 lines the NADP(+) pocket.

The protein belongs to the shikimate dehydrogenase family. In terms of assembly, homodimer.

The catalysed reaction is shikimate + NADP(+) = 3-dehydroshikimate + NADPH + H(+). Its pathway is metabolic intermediate biosynthesis; chorismate biosynthesis; chorismate from D-erythrose 4-phosphate and phosphoenolpyruvate: step 4/7. Its function is as follows. Involved in the biosynthesis of the chorismate, which leads to the biosynthesis of aromatic amino acids. Catalyzes the reversible NADPH linked reduction of 3-dehydroshikimate (DHSA) to yield shikimate (SA). This chain is Shikimate dehydrogenase (NADP(+)), found in Photorhabdus laumondii subsp. laumondii (strain DSM 15139 / CIP 105565 / TT01) (Photorhabdus luminescens subsp. laumondii).